Reading from the N-terminus, the 28-residue chain is Gamma-conotoxin-like de7a (28 aa).

Disulfide bonds link C2–C18, C9–C22, and C17–C27. P4 bears the 4-hydroxyproline mark. 4-carboxyglutamate occurs at positions 13 and 16. S28 is subject to Serine amide.

This sequence belongs to the conotoxin O1 superfamily. Expressed by the venom duct.

Its subcellular location is the secreted. Its function is as follows. Gamma-conotoxins may act on voltage-gated non-specific cation pacemaker channels (HCN). The sequence is that of Gamma-conotoxin-like de7a from Conasprella delessertii (Sozon's cone).